A 276-amino-acid chain; its full sequence is NADPH-dependent 7-cyano-7-deazaguanine reductase (276 aa).

83–85 serves as a coordination point for substrate; it reads IES. NADPH is bound at residue 85 to 86; sequence SK. Cys184 functions as the Thioimide intermediate in the catalytic mechanism. Asp191 serves as the catalytic Proton donor. 223-224 contributes to the substrate binding site; it reads HE. 252 to 253 contributes to the NADPH binding site; that stretch reads RG.

It belongs to the GTP cyclohydrolase I family. QueF type 2 subfamily. As to quaternary structure, homodimer.

It localises to the cytoplasm. It carries out the reaction 7-aminomethyl-7-carbaguanine + 2 NADP(+) = 7-cyano-7-deazaguanine + 2 NADPH + 3 H(+). It participates in tRNA modification; tRNA-queuosine biosynthesis. Its function is as follows. Catalyzes the NADPH-dependent reduction of 7-cyano-7-deazaguanine (preQ0) to 7-aminomethyl-7-deazaguanine (preQ1). This is NADPH-dependent 7-cyano-7-deazaguanine reductase from Pseudomonas putida (strain W619).